The primary structure comprises 278 residues: MAVAYADKPNHFINFPLTQFEGFVLNYKGLQFQLLDEGVDCKIQTAPHISLAMLDIQPEDYRSVDVAIQEVIDDMHWGEGFQIKFDNPLILGRCIVLDVKGVEELHDDLVNYIRDKGCVADQSRKWIGHCTIAQLTDAALSIKENVDFINSMQFNYKITINPSSPARLEIVKLGAEKKDGFYETIVSHWMGIRFEYNPPTDKLAMIMGYCCLEVVRKELEEGDLPENDDDAWFKLSYHYENNSWFFRHVYRKSSYFRKSCQNLDCNCLGFYESPVEED.

This sequence belongs to the coronaviruses ns2a protein family.

This chain is Non-structural protein 2a, found in Bovine coronavirus (strain Mebus) (BCoV).